Reading from the N-terminus, the 156-residue chain is ATP synthase subunit b (156 aa).

Residues 3 to 23 (INFTLLAQALAFAGLIWIIAT) form a helical membrane-spanning segment.

This sequence belongs to the ATPase B chain family. F-type ATPases have 2 components, F(1) - the catalytic core - and F(0) - the membrane proton channel. F(1) has five subunits: alpha(3), beta(3), gamma(1), delta(1), epsilon(1). F(0) has three main subunits: a(1), b(2) and c(10-14). The alpha and beta chains form an alternating ring which encloses part of the gamma chain. F(1) is attached to F(0) by a central stalk formed by the gamma and epsilon chains, while a peripheral stalk is formed by the delta and b chains.

It localises to the cell inner membrane. In terms of biological role, f(1)F(0) ATP synthase produces ATP from ADP in the presence of a proton or sodium gradient. F-type ATPases consist of two structural domains, F(1) containing the extramembraneous catalytic core and F(0) containing the membrane proton channel, linked together by a central stalk and a peripheral stalk. During catalysis, ATP synthesis in the catalytic domain of F(1) is coupled via a rotary mechanism of the central stalk subunits to proton translocation. Functionally, component of the F(0) channel, it forms part of the peripheral stalk, linking F(1) to F(0). This chain is ATP synthase subunit b, found in Stenotrophomonas maltophilia (strain R551-3).